The following is a 307-amino-acid chain: Homoserine kinase (307 aa).

Residue 92 to 102 (PLARGLGSSAT) coordinates ATP.

The protein belongs to the GHMP kinase family. Homoserine kinase subfamily.

It is found in the cytoplasm. The catalysed reaction is L-homoserine + ATP = O-phospho-L-homoserine + ADP + H(+). The protein operates within amino-acid biosynthesis; L-threonine biosynthesis; L-threonine from L-aspartate: step 4/5. Functionally, catalyzes the ATP-dependent phosphorylation of L-homoserine to L-homoserine phosphate. In Microchaete diplosiphon (Fremyella diplosiphon), this protein is Homoserine kinase (thrB).